A 331-amino-acid chain; its full sequence is Ketol-acid reductoisomerase (NADP(+)) (331 aa).

Residues 4–183 (ATIYYDDDAE…GCTRAGVVET (180 aa)) form the KARI N-terminal Rossmann domain. NADP(+) is bound by residues 27–30 (YGSQ), R50, S53, S55, and 85–88 (DTVQ). H109 is a catalytic residue. G135 contacts NADP(+). One can recognise a KARI C-terminal knotted domain in the interval 184 to 329 (TFREETETDL…EDLRALFAWG (146 aa)). D192, E196, E228, and E232 together coordinate Mg(2+). S253 provides a ligand contact to substrate.

This sequence belongs to the ketol-acid reductoisomerase family. It depends on Mg(2+) as a cofactor.

It carries out the reaction (2R)-2,3-dihydroxy-3-methylbutanoate + NADP(+) = (2S)-2-acetolactate + NADPH + H(+). It catalyses the reaction (2R,3R)-2,3-dihydroxy-3-methylpentanoate + NADP(+) = (S)-2-ethyl-2-hydroxy-3-oxobutanoate + NADPH + H(+). It functions in the pathway amino-acid biosynthesis; L-isoleucine biosynthesis; L-isoleucine from 2-oxobutanoate: step 2/4. It participates in amino-acid biosynthesis; L-valine biosynthesis; L-valine from pyruvate: step 2/4. Functionally, involved in the biosynthesis of branched-chain amino acids (BCAA). Catalyzes an alkyl-migration followed by a ketol-acid reduction of (S)-2-acetolactate (S2AL) to yield (R)-2,3-dihydroxy-isovalerate. In the isomerase reaction, S2AL is rearranged via a Mg-dependent methyl migration to produce 3-hydroxy-3-methyl-2-ketobutyrate (HMKB). In the reductase reaction, this 2-ketoacid undergoes a metal-dependent reduction by NADPH to yield (R)-2,3-dihydroxy-isovalerate. This is Ketol-acid reductoisomerase (NADP(+)) from Natronomonas pharaonis (strain ATCC 35678 / DSM 2160 / CIP 103997 / JCM 8858 / NBRC 14720 / NCIMB 2260 / Gabara) (Halobacterium pharaonis).